Consider the following 622-residue polypeptide: Mitochondrial Rho GTPase 2 (622 aa).

Topologically, residues 1–596 (MRRDVRILLL…ELHPTPFWLR (596 aa)) are cytoplasmic. Residues 2 to 168 (RRDVRILLLG…FYYAQKAVLH (167 aa)) enclose the Miro 1 domain. Residues glycine 16, lysine 17, threonine 18, and serine 19 each coordinate GTP. A Mg(2+)-binding site is contributed by threonine 18. Mg(2+) is bound at residue aspartate 57. A GTP-binding site is contributed by serine 59. Residue lysine 96 forms a Glycyl lysine isopeptide (Lys-Gly) (interchain with G-Cter in ubiquitin) linkage. Positions 118, 119, 121, 149, and 150 each coordinate GTP. Lysine 119 participates in a covalent cross-link: Glycyl lysine isopeptide (Lys-Gly) (interchain with G-Cter in ubiquitin). Residue lysine 164 forms a Glycyl lysine isopeptide (Lys-Gly) (interchain with G-Cter in ubiquitin) linkage. EF-hand domains lie at 184–219 (ACAQ…CFGH) and 304–339 (RGYQ…FSVA). Positions 197, 199, 201, 208, 317, 319, 321, and 328 each coordinate Ca(2+). The 166-residue stretch at 415–580 (RSVLMCKVLG…FTQLATMATF (166 aa)) folds into the Miro 2 domain. Residues glycine 427, glycine 429, lysine 430, serine 431, and alanine 432 each coordinate GTP. Mg(2+) is bound at residue serine 431. Glutamate 475 serves as a coordination point for Mg(2+). GTP-binding residues include lysine 529, aspartate 531, and cysteine 560. A helical; Anchor for type IV membrane protein transmembrane segment spans residues 597–619 (GVLVAVGTAVAAVLSFSLYRVLV). The Mitochondrial intermembrane portion of the chain corresponds to 620-622 (KSR).

This sequence belongs to the mitochondrial Rho GTPase family. Homodimer. Interacts with the kinesin-binding proteins TRAK1/OIP106 and TRAK2/GRIF1, forming a link between mitochondria and the trafficking apparatus of the microtubules. Interacts with ARMCX3. Found in a complex with KIF5B, OGT, RHOT1 and TRAK1. In terms of processing, ubiquitinated by PRKN in a PINK1-dependent manner, leading to its degradation.

The protein resides in the mitochondrion outer membrane. The enzyme catalyses GTP + H2O = GDP + phosphate + H(+). It carries out the reaction ATP + H2O = ADP + phosphate + H(+). It catalyses the reaction UTP + H2O = UDP + phosphate + H(+). Atypical mitochondrial nucleoside-triphosphatase (NTPase) involved in mitochondrial trafficking. Probably involved in control of anterograde transport of mitochondria and their subcellular distribution. Can hydrolyze GTP, ATP and UTP. This is Mitochondrial Rho GTPase 2 (Rhot2) from Rattus norvegicus (Rat).